Here is a 301-residue protein sequence, read N- to C-terminus: UDP-3-O-acyl-N-acetylglucosamine deacetylase (301 aa).

The Zn(2+) site is built by His75, His233, and Asp237. His260 serves as the catalytic Proton donor.

Belongs to the LpxC family. It depends on Zn(2+) as a cofactor.

The catalysed reaction is a UDP-3-O-[(3R)-3-hydroxyacyl]-N-acetyl-alpha-D-glucosamine + H2O = a UDP-3-O-[(3R)-3-hydroxyacyl]-alpha-D-glucosamine + acetate. It participates in glycolipid biosynthesis; lipid IV(A) biosynthesis; lipid IV(A) from (3R)-3-hydroxytetradecanoyl-[acyl-carrier-protein] and UDP-N-acetyl-alpha-D-glucosamine: step 2/6. Its function is as follows. Catalyzes the hydrolysis of UDP-3-O-myristoyl-N-acetylglucosamine to form UDP-3-O-myristoylglucosamine and acetate, the committed step in lipid A biosynthesis. This is UDP-3-O-acyl-N-acetylglucosamine deacetylase from Aliarcobacter butzleri (strain RM4018) (Arcobacter butzleri).